The following is a 250-amino-acid chain: Probable aquaporin TIP-type RB7-5A (250 aa).

2 helical membrane-spanning segments follow: residues 20–42 and 55–77; these read AYVA…AIAY and GLVA…AANI. The short motif at 83–85 is the NPA 1 element; that stretch reads NPA. 3 consecutive transmembrane segments (helical) span residues 97–119, 140–162, and 172–194; these read TILT…CLLL, LQGV…ATAA, and IAPI…FSGG. The NPA 2 motif lies at 197–199; sequence NPA. A helical membrane pass occupies residues 215 to 237; it reads WIYWAGPLIGGGLAGFIYGDVFI.

Belongs to the MIP/aquaporin (TC 1.A.8) family. TIP (TC 1.A.8.10) subfamily. Roots.

The protein resides in the vacuole membrane. Channel protein in tonoplast. These proteins may allow the diffusion of amino acids and/or peptides from the vacuolar compartment to the cytoplasm. The protein is Probable aquaporin TIP-type RB7-5A of Nicotiana tabacum (Common tobacco).